A 215-amino-acid chain; its full sequence is dITP/XTP pyrophosphatase (215 aa).

Residue 13–18 (THNIGK) participates in substrate binding. The active-site Proton acceptor is Asp-74. A Mg(2+)-binding site is contributed by Asp-74. Substrate contacts are provided by residues Ser-75, 163–166 (FGFD), Lys-186, and 199–200 (HR).

The protein belongs to the HAM1 NTPase family. In terms of assembly, homodimer. It depends on Mg(2+) as a cofactor.

It catalyses the reaction XTP + H2O = XMP + diphosphate + H(+). The catalysed reaction is dITP + H2O = dIMP + diphosphate + H(+). It carries out the reaction ITP + H2O = IMP + diphosphate + H(+). In terms of biological role, pyrophosphatase that catalyzes the hydrolysis of nucleoside triphosphates to their monophosphate derivatives, with a high preference for the non-canonical purine nucleotides XTP (xanthosine triphosphate), dITP (deoxyinosine triphosphate) and ITP. Seems to function as a house-cleaning enzyme that removes non-canonical purine nucleotides from the nucleotide pool, thus preventing their incorporation into DNA/RNA and avoiding chromosomal lesions. This Bartonella henselae (strain ATCC 49882 / DSM 28221 / CCUG 30454 / Houston 1) (Rochalimaea henselae) protein is dITP/XTP pyrophosphatase.